Here is a 723-residue protein sequence, read N- to C-terminus: Fatty acid oxidation complex subunit alpha (723 aa).

Residues 1–189 are enoyl-CoA hydratase/isomerase; it reads MIYQANTLQV…KVGLLDAIVE (189 aa). Substrate is bound at residue aspartate 296. Residues 311–723 form a 3-hydroxyacyl-CoA dehydrogenase region; that stretch reads NKATERAAVL…FYDGQQASSL (413 aa). NAD(+)-binding positions include methionine 325, aspartate 344, 401-403, lysine 408, and serine 430; that span reads VVE. The active-site For 3-hydroxyacyl-CoA dehydrogenase activity is histidine 451. Asparagine 454 lines the NAD(+) pocket. Positions 501 and 661 each coordinate substrate.

In the N-terminal section; belongs to the enoyl-CoA hydratase/isomerase family. It in the C-terminal section; belongs to the 3-hydroxyacyl-CoA dehydrogenase family. In terms of assembly, heterotetramer of two alpha chains (FadB) and two beta chains (FadA).

It catalyses the reaction a (3S)-3-hydroxyacyl-CoA + NAD(+) = a 3-oxoacyl-CoA + NADH + H(+). It carries out the reaction a (3S)-3-hydroxyacyl-CoA = a (2E)-enoyl-CoA + H2O. The catalysed reaction is a 4-saturated-(3S)-3-hydroxyacyl-CoA = a (3E)-enoyl-CoA + H2O. The enzyme catalyses (3S)-3-hydroxybutanoyl-CoA = (3R)-3-hydroxybutanoyl-CoA. It catalyses the reaction a (3Z)-enoyl-CoA = a 4-saturated (2E)-enoyl-CoA. It carries out the reaction a (3E)-enoyl-CoA = a 4-saturated (2E)-enoyl-CoA. It participates in lipid metabolism; fatty acid beta-oxidation. In terms of biological role, involved in the aerobic and anaerobic degradation of long-chain fatty acids via beta-oxidation cycle. Catalyzes the formation of 3-oxoacyl-CoA from enoyl-CoA via L-3-hydroxyacyl-CoA. It can also use D-3-hydroxyacyl-CoA and cis-3-enoyl-CoA as substrate. This is Fatty acid oxidation complex subunit alpha from Vibrio atlanticus (strain LGP32) (Vibrio splendidus (strain Mel32)).